Here is a 150-residue protein sequence, read N- to C-terminus: Ribonuclease H (150 aa).

Positions 1–141 (MKFIEVHTDG…VDVLARNQAI (141 aa)) constitute an RNase H type-1 domain. 4 residues coordinate Mg(2+): D9, E47, D69, and D133.

It belongs to the RNase H family. In terms of assembly, monomer. The cofactor is Mg(2+).

Its subcellular location is the cytoplasm. The catalysed reaction is Endonucleolytic cleavage to 5'-phosphomonoester.. Endonuclease that specifically degrades the RNA of RNA-DNA hybrids. This chain is Ribonuclease H, found in Xanthomonas euvesicatoria pv. vesicatoria (strain 85-10) (Xanthomonas campestris pv. vesicatoria).